The sequence spans 448 residues: D-inositol 3-phosphate glycosyltransferase (448 aa).

1D-myo-inositol 3-phosphate-binding positions include His-35, 46 to 51 (DAGGLN), Lys-104, Tyr-137, Thr-161, and Arg-181. Gly-49 contacts UDP-N-acetyl-alpha-D-glucosamine. Positions 255, 260, and 321 each coordinate UDP-N-acetyl-alpha-D-glucosamine. 3 residues coordinate Mg(2+): Tyr-330, Arg-331, and Ala-333. The UDP-N-acetyl-alpha-D-glucosamine site is built by Glu-343 and Glu-351. A Mg(2+)-binding site is contributed by Thr-357.

Belongs to the glycosyltransferase group 1 family. MshA subfamily. As to quaternary structure, homodimer.

The enzyme catalyses 1D-myo-inositol 3-phosphate + UDP-N-acetyl-alpha-D-glucosamine = 1D-myo-inositol 2-acetamido-2-deoxy-alpha-D-glucopyranoside 3-phosphate + UDP + H(+). In terms of biological role, catalyzes the transfer of a N-acetyl-glucosamine moiety to 1D-myo-inositol 3-phosphate to produce 1D-myo-inositol 2-acetamido-2-deoxy-glucopyranoside 3-phosphate in the mycothiol biosynthesis pathway. In Acidothermus cellulolyticus (strain ATCC 43068 / DSM 8971 / 11B), this protein is D-inositol 3-phosphate glycosyltransferase.